The chain runs to 20 residues: Phospholipase A2 homolog P-elapitoxin-Aa1a gamma chain (20 aa).

It belongs to the phospholipase A2 family. Group I subfamily. In terms of assembly, heterotrimer of alpha, beta and gamma chains, each related to PLA2. Glycosylated. As to expression, expressed by the venom gland.

It is found in the secreted. Its function is as follows. Heterotrimer: Snake venom phospholipase A2 (PLA2) that has presynaptic neurotoxicity. Inhibits nerve-evoked twitch contractions but not responses to cholinergic agonists acetylcholine and carbachol and to depolarizing agonist KCl. Causes a fade in tetanic contractions. Displays a triphasic mode of action with depression, enhancement and blockade of neurotransmission. Does not display myotoxic activity such as changes in baseline muscle tension or inhibition of directly stimulated muscle twitches. All subunits are necessary for maximum toxicity. In terms of biological role, monomer: the gamma chain has no significant enzymatic activity and is not toxic by itself. The chain is Phospholipase A2 homolog P-elapitoxin-Aa1a gamma chain from Acanthophis antarcticus (Common death adder).